An 848-amino-acid chain; its full sequence is MSLHRTLRRFLRKWKALVYAVSFILLIQAFFTFQSSPNLMEEEHLRRLKELQIKKHQELANSMLQGERALVHGRDKLVLNPRDPGFREEFFKHSNNEINILEDHNIGQVDKMEKPVLKPNENKFEEIHFATEKVPEIIVKYQPKCDITIKDSISALSRATTDRCKQQIADAACKMQDGTLFPKSMPRTCKHESKFTFDAPMPTSFDPDIRPVRICYMLVVHGRAIRQLRRLLKVIYHRDHYYYIHVDKRSDYLLREVLKETEQYPNIKVAPWRMATIWGGSSLLQTLLRAISDVLRIWKDWDFFINLSALDFPIEKDEKLVQYLSKYRDKNFMKSHGREDEKFIRKQGLNRVFVECDQHMWRLGERQLPEGITVNGGSDWVALNRRLCDFAVNGNDQLLTQLKHWYEYTLLPAESFFHTLVQNSDLCETFVDNNIRVTNWNRARGCKCQYKHIVDWCGCSPNDFYPSDLVRLRTSRPVFFARKFEESINQEVVNHLDFKLYGDYPPGTPALHSLWENALRVNSKMPSDCNLSVVSMLQVEMHKKDEEFVGYVVTFDAGWVGRRGAGDDPATSEDGSRVQLQAFLSPQPSLRILDRSSNLAKRLETASVGTNWDVKELVIRDWGGLVGPNSDVHLVARWSRSEDDFVVTVVVIDPLNVVADYNDFRTPSKAAGVTETPLSLKKPLRPGRWLVRFYVQRQFTNICAELDFYVTPQEFKGGIEGDSVLREINRGVVDDAQVNAANRNLYSIRTTLNLARNNQAETELASESNHVAGLKLRNWVDFVVSSGWKAKDACLVAQSPETWREAQPRRCFMPRQGTPNLCENTNWSSLSPDPKTELISVKPDGRIR.

At 1–14 the chain is on the cytoplasmic side; the sequence is MSLHRTLRRFLRKW. The helical; Signal-anchor for type II membrane protein transmembrane segment at 15 to 35 threads the bilayer; that stretch reads KALVYAVSFILLIQAFFTFQS. Topologically, residues 36–843 are lumenal; it reads SPNLMEEEHL…PKTELISVKP (808 aa). Cystine bridges form between Cys145-Cys173, Cys189-Cys427, Cys446-Cys459, and Cys448-Cys457. Residues Val219, Asp247, and 276-278 contribute to the UDP-alpha-D-xylose site; that span reads TIW. Residue Asn306 is glycosylated (N-linked (GlcNAc...) asparagine). 379–380 contacts UDP-alpha-D-xylose; the sequence is DW. UDP-alpha-D-xylose contacts are provided by residues Ser460 and 482-483; that span reads RK. 2 cysteine pairs are disulfide-bonded: Cys529–Cys811 and Cys794–Cys822. Asn530 carries N-linked (GlcNAc...) asparagine glycosylation. The segment at 824–848 is disordered; it reads NTNWSSLSPDPKTELISVKPDGRIR. Asn826 is a glycosylation site (N-linked (GlcNAc...) asparagine).

This sequence belongs to the glycosyltransferase 14 family. XylT subfamily. The cofactor is a divalent metal cation.

Its subcellular location is the endoplasmic reticulum membrane. The protein resides in the golgi apparatus membrane. The catalysed reaction is UDP-alpha-D-xylose + L-seryl-[protein] = 3-O-(beta-D-xylosyl)-L-seryl-[protein] + UDP + H(+). It participates in glycan metabolism; chondroitin sulfate biosynthesis. It functions in the pathway glycan metabolism; heparan sulfate biosynthesis. Catalyzes the first step in biosynthesis of glycosaminoglycan. Transfers D-xylose from UDP-D-xylose to specific serine residues of the core protein. Initial enzyme in the biosynthesis of chondroitin sulfate and dermatan sulfate proteoglycans in fibroblasts and chondrocytes. This is Xylosyltransferase (xt) from Ciona intestinalis (Transparent sea squirt).